The following is a 375-amino-acid chain: Alcohol dehydrogenase 1 (375 aa).

N-acetylserine is present on Ser-2. Zn(2+) contacts are provided by Cys-47, His-68, Cys-98, Cys-101, Cys-104, Cys-112, and Cys-175. NAD(+)-binding positions include 200–205, Asp-224, and Lys-229; that span reads WSGRVG. Lys-234 carries the post-translational modification N6-succinyllysine. 293–295 contributes to the NAD(+) binding site; the sequence is VGV. An N6-succinyllysine modification is found at Lys-340. An NAD(+)-binding site is contributed by Arg-370.

It belongs to the zinc-containing alcohol dehydrogenase family. Class-I subfamily. As to quaternary structure, homodimer. Requires Zn(2+) as cofactor.

The protein localises to the cytoplasm. The enzyme catalyses a primary alcohol + NAD(+) = an aldehyde + NADH + H(+). It carries out the reaction a secondary alcohol + NAD(+) = a ketone + NADH + H(+). The polypeptide is Alcohol dehydrogenase 1 (ADH1) (Geomys knoxjonesi (Jones' pocket gopher)).